An 866-amino-acid chain; its full sequence is Leucine--tRNA ligase (866 aa).

A 'HIGH' region motif is present at residues 59-69 (PYPSGDLHMGH). The tract at residues 393–421 (VPVIKTDPQTGEPLLPESAPLESPAETGQ) is disordered. Positions 404–418 (EPLLPESAPLESPAE) are enriched in low complexity. The short motif at 628–632 (AMSKS) is the 'KMSKS' region element. K631 is an ATP binding site.

This sequence belongs to the class-I aminoacyl-tRNA synthetase family.

It is found in the cytoplasm. The enzyme catalyses tRNA(Leu) + L-leucine + ATP = L-leucyl-tRNA(Leu) + AMP + diphosphate. This is Leucine--tRNA ligase from Leifsonia xyli subsp. xyli (strain CTCB07).